The primary structure comprises 240 residues: ATP-dependent Clp protease proteolytic subunit 2 (240 aa).

Catalysis depends on S132, which acts as the Nucleophile. Residue H157 is part of the active site.

This sequence belongs to the peptidase S14 family. As to quaternary structure, fourteen ClpP subunits assemble into 2 heptameric rings which stack back to back to give a disk-like structure with a central cavity, resembling the structure of eukaryotic proteasomes.

It localises to the cytoplasm. The catalysed reaction is Hydrolysis of proteins to small peptides in the presence of ATP and magnesium. alpha-casein is the usual test substrate. In the absence of ATP, only oligopeptides shorter than five residues are hydrolyzed (such as succinyl-Leu-Tyr-|-NHMec, and Leu-Tyr-Leu-|-Tyr-Trp, in which cleavage of the -Tyr-|-Leu- and -Tyr-|-Trp bonds also occurs).. In terms of biological role, cleaves peptides in various proteins in a process that requires ATP hydrolysis. Has a chymotrypsin-like activity. Plays a major role in the degradation of misfolded proteins. This Synechococcus elongatus (strain ATCC 33912 / PCC 7942 / FACHB-805) (Anacystis nidulans R2) protein is ATP-dependent Clp protease proteolytic subunit 2.